A 228-amino-acid polypeptide reads, in one-letter code: Small ribosomal subunit protein uS3 (228 aa).

Residues 39–107 form the KH type-2 domain; that stretch reads IRKELNEKLK…PVNINIEEIK (69 aa).

The protein belongs to the universal ribosomal protein uS3 family. In terms of assembly, part of the 30S ribosomal subunit. Forms a tight complex with proteins S10 and S14.

Its function is as follows. Binds the lower part of the 30S subunit head. Binds mRNA in the 70S ribosome, positioning it for translation. The polypeptide is Small ribosomal subunit protein uS3 (Hydrogenovibrio crunogenus (strain DSM 25203 / XCL-2) (Thiomicrospira crunogena)).